We begin with the raw amino-acid sequence, 232 residues long: Small ribosomal subunit protein uS3 (232 aa).

The KH type-2 domain maps to 39–107 (VRQFLTKELA…PAQINIAEVR (69 aa)).

The protein belongs to the universal ribosomal protein uS3 family. In terms of assembly, part of the 30S ribosomal subunit. Forms a tight complex with proteins S10 and S14.

Binds the lower part of the 30S subunit head. Binds mRNA in the 70S ribosome, positioning it for translation. The chain is Small ribosomal subunit protein uS3 from Erwinia tasmaniensis (strain DSM 17950 / CFBP 7177 / CIP 109463 / NCPPB 4357 / Et1/99).